The sequence spans 662 residues: DNA ligase (662 aa).

Residues 31–35 and 79–80 each bind NAD(+); these read DKDYD and SL. K121 acts as the N6-AMP-lysine intermediate in catalysis. NAD(+)-binding residues include R143, E177, and K313. 4 residues coordinate Zn(2+): C406, C409, C422, and C428. A BRCT domain is found at 586–662; the sequence is VLESPFMGKT…LSEEEFENMI (77 aa).

The protein belongs to the NAD-dependent DNA ligase family. LigA subfamily. Requires Mg(2+) as cofactor. Mn(2+) is required as a cofactor.

The enzyme catalyses NAD(+) + (deoxyribonucleotide)n-3'-hydroxyl + 5'-phospho-(deoxyribonucleotide)m = (deoxyribonucleotide)n+m + AMP + beta-nicotinamide D-nucleotide.. DNA ligase that catalyzes the formation of phosphodiester linkages between 5'-phosphoryl and 3'-hydroxyl groups in double-stranded DNA using NAD as a coenzyme and as the energy source for the reaction. It is essential for DNA replication and repair of damaged DNA. The sequence is that of DNA ligase from Clostridium perfringens (strain SM101 / Type A).